We begin with the raw amino-acid sequence, 565 residues long: Dihydroxy-acid dehydratase (565 aa).

Asp-83 is a Mg(2+) binding site. Cys-124 is a binding site for [2Fe-2S] cluster. Mg(2+) is bound by residues Asp-125 and Lys-126. An N6-carboxylysine modification is found at Lys-126. Cys-197 contacts [2Fe-2S] cluster. Residue Glu-451 participates in Mg(2+) binding. Residue Ser-477 is the Proton acceptor of the active site.

Belongs to the IlvD/Edd family. As to quaternary structure, homodimer. Requires [2Fe-2S] cluster as cofactor. Mg(2+) serves as cofactor.

The enzyme catalyses (2R)-2,3-dihydroxy-3-methylbutanoate = 3-methyl-2-oxobutanoate + H2O. It catalyses the reaction (2R,3R)-2,3-dihydroxy-3-methylpentanoate = (S)-3-methyl-2-oxopentanoate + H2O. Its pathway is amino-acid biosynthesis; L-isoleucine biosynthesis; L-isoleucine from 2-oxobutanoate: step 3/4. The protein operates within amino-acid biosynthesis; L-valine biosynthesis; L-valine from pyruvate: step 3/4. Its function is as follows. Functions in the biosynthesis of branched-chain amino acids. Catalyzes the dehydration of (2R,3R)-2,3-dihydroxy-3-methylpentanoate (2,3-dihydroxy-3-methylvalerate) into 2-oxo-3-methylpentanoate (2-oxo-3-methylvalerate) and of (2R)-2,3-dihydroxy-3-methylbutanoate (2,3-dihydroxyisovalerate) into 2-oxo-3-methylbutanoate (2-oxoisovalerate), the penultimate precursor to L-isoleucine and L-valine, respectively. The protein is Dihydroxy-acid dehydratase of Symbiobacterium thermophilum (strain DSM 24528 / JCM 14929 / IAM 14863 / T).